The following is a 250-amino-acid chain: GILT-like protein 1 (250 aa).

An N-terminal signal peptide occupies residues 1–21 (MSHKIAAVCLLMSCLIATAYS). N-linked (GlcNAc...) asparagine glycosylation occurs at asparagine 157.

It belongs to the GILT family. In terms of processing, conjugated to URM1, a ubiquitin-like protein.

It is found in the secreted. Involved in the immune response to bacterial infection. The sequence is that of GILT-like protein 1 from Drosophila melanogaster (Fruit fly).